The chain runs to 239 residues: Pimeloyl-[acyl-carrier protein] methyl ester esterase (239 aa).

Substrate is bound by residues W20, 77-78, and 138-142; these read SM and FISLQ. The active-site Nucleophile is S77. Catalysis depends on residues D192 and H220. H220 lines the substrate pocket.

Belongs to the AB hydrolase superfamily. Carboxylesterase BioH family. Monomer.

The protein resides in the cytoplasm. It catalyses the reaction 6-carboxyhexanoyl-[ACP] methyl ester + H2O = 6-carboxyhexanoyl-[ACP] + methanol + H(+). It functions in the pathway cofactor biosynthesis; biotin biosynthesis. In terms of biological role, the physiological role of BioH is to remove the methyl group introduced by BioC when the pimeloyl moiety is complete. It allows to synthesize pimeloyl-ACP via the fatty acid synthetic pathway through the hydrolysis of the ester bonds of pimeloyl-ACP esters. This chain is Pimeloyl-[acyl-carrier protein] methyl ester esterase, found in Legionella pneumophila (strain Corby).